Consider the following 90-residue polypeptide: MQLFLLAALLSAAAALPIPLGQSGGSSSEQRFNLYAPQILPFFPPFPLPQAPLIPIPFPFPFDPNQVLTPNQLLELITSILNQLQGFLGR.

A signal peptide spans 1-15 (MQLFLLAALLSAAAA).

Expressed in enamel organ.

Its subcellular location is the secreted. Its function is as follows. Tooth-associated epithelia protein that may participate in structuring the basal lamina at cell-tooth interface. The sequence is that of Secretory calcium-binding phosphoprotein proline-glutamine-rich 1 from Mus musculus (Mouse).